Consider the following 175-residue polypeptide: uncharacterized protein (175 aa).

This is an uncharacterized protein from Connochaetes taurinus (Blue wildebeest).